The sequence spans 684 residues: G-protein-signaling modulator 2 (684 aa).

Residues 22–357 are important for interaction with NUMA1; INSC and FRMPD1; that stretch reads ASCLELALEG…HLEISREVGD (336 aa). 8 TPR repeats span residues 24-57, 62-95, 102-135, 142-184, 202-235, 242-275, 282-315, and 322-355; these read CLEL…GTED, SAIY…ARTI, AKAS…SREL, ARAL…AVDF, GRAF…AKEF, RRAY…ARQL, AQSC…AQEL, and GRAC…SREV. A Phosphoserine; by PKG modification is found at Ser-132. Ser-352 carries the post-translational modification Phosphoserine; by PKG. Phosphoserine occurs at positions 408 and 483. Phosphothreonine is present on Thr-486. The GoLoco 1 domain occupies 489-511; it reads DEGFFDLLSRFQSNRMDDQRCCL. The residue at position 501 (Ser-501) is a Phosphoserine; by PKC. Residues Ser-541 and Ser-565 each carry the phosphoserine modification. 3 GoLoco domains span residues 544-566, 594-616, and 628-650; these read TDEF…RASF, DEDF…RCAP, and DEDF…RVLL. Ser-607 carries the post-translational modification Phosphoserine; by PKG. Arg-608, Arg-613, Arg-642, and Arg-647 together coordinate GDP.

The protein belongs to the GPSM family. As to quaternary structure, interacts with the dynein-dynactin complex; this interaction is inhibited in a PLK1-dependent manner. Part of a spindle orientation complex at least composed of GNAI1, GPSM2 and NUMA1. Interacts with LLGL2. Interacts (via TPR repeat region) with INSC/inscuteable. Interacts (via TPR repeat region) with NUMA1 (via C-terminus); this interaction is direct, inhibited in a PLK1-dependent manner, prevents the binding of NUMA1 with SPAG5 and promotes spindle pole organization. INSC and NUMA1 compete for the same binding site, but INSC has higher affinity and can displace NUMA1 (in vitro). Interacts with GNAI2. Interacts (via GoLoco domains) with the GDP-bound form of GNAI1 and GNAI3; has much lower affinity for the GTP-bound form. Interaction with GDP-bound GNAI3 strongly enhances the affinity for NUMA1. Interacts (via TPR repeat region) with FRMPD1. INSC and FRMPD1 compete for the same binding site, but INSC has higher affinity and can displace FRMPD1 (in vitro). Interacts (via TPR repeat region) with FRMPD4. Identified in a complex with INSC and F2RL2/Par3. Interacts with TASOR. Ubiquitously expressed.

It localises to the cytoplasm. The protein localises to the cell cortex. The protein resides in the cytoskeleton. It is found in the spindle pole. Its subcellular location is the lateral cell membrane. Plays an important role in mitotic spindle pole organization via its interaction with NUMA1. Required for cortical dynein-dynactin complex recruitment during metaphase. Plays a role in metaphase spindle orientation. Also plays an important role in asymmetric cell divisions. Has guanine nucleotide dissociation inhibitor (GDI) activity towards G(i) alpha proteins, such as GNAI1 and GNAI3, and thereby regulates their activity. The chain is G-protein-signaling modulator 2 (GPSM2) from Homo sapiens (Human).